The following is a 198-amino-acid chain: Recombination protein RecR (198 aa).

The segment at 56 to 71 (CTECRDFSETKICAIC) adopts a C4-type zinc-finger fold. The Toprim domain occupies 79–174 (HQLCVVESPP…RPSRLAQGLP (96 aa)).

This sequence belongs to the RecR family.

Functionally, may play a role in DNA repair. It seems to be involved in an RecBC-independent recombinational process of DNA repair. It may act with RecF and RecO. The protein is Recombination protein RecR of Xylella fastidiosa (strain Temecula1 / ATCC 700964).